Consider the following 543-residue polypeptide: CTP synthase (543 aa).

An amidoligase domain region spans residues 1–265; that stretch reads MARYIFITGG…DDEVLAAFGI (265 aa). A CTP-binding site is contributed by Ser-13. A UTP-binding site is contributed by Ser-13. Residue 14–19 participates in ATP binding; that stretch reads SLGKGL. Tyr-54 contacts L-glutamine. An ATP-binding site is contributed by Asp-71. 2 residues coordinate Mg(2+): Asp-71 and Glu-139. CTP is bound by residues 146 to 148, 186 to 191, and Lys-222; these read DIE and KTKPTQ. UTP-binding positions include 186–191 and Lys-222; that span reads KTKPTQ. An ATP-binding site is contributed by 238-240; that stretch reads RDV. The Glutamine amidotransferase type-1 domain maps to 291–542; sequence TIAIVGKYTG…IQAAVVQSRL (252 aa). An L-glutamine-binding site is contributed by Gly-353. Catalysis depends on Cys-380, which acts as the Nucleophile; for glutamine hydrolysis. L-glutamine contacts are provided by residues 381-384, Glu-404, and Arg-470; that span reads FGMQ. Residues His-515 and Glu-517 contribute to the active site.

Belongs to the CTP synthase family. In terms of assembly, homotetramer.

The catalysed reaction is UTP + L-glutamine + ATP + H2O = CTP + L-glutamate + ADP + phosphate + 2 H(+). It catalyses the reaction L-glutamine + H2O = L-glutamate + NH4(+). The enzyme catalyses UTP + NH4(+) + ATP = CTP + ADP + phosphate + 2 H(+). The protein operates within pyrimidine metabolism; CTP biosynthesis via de novo pathway; CTP from UDP: step 2/2. Its activity is regulated as follows. Allosterically activated by GTP, when glutamine is the substrate; GTP has no effect on the reaction when ammonia is the substrate. The allosteric effector GTP functions by stabilizing the protein conformation that binds the tetrahedral intermediate(s) formed during glutamine hydrolysis. Inhibited by the product CTP, via allosteric rather than competitive inhibition. Its function is as follows. Catalyzes the ATP-dependent amination of UTP to CTP with either L-glutamine or ammonia as the source of nitrogen. Regulates intracellular CTP levels through interactions with the four ribonucleotide triphosphates. In Bradyrhizobium sp. (strain BTAi1 / ATCC BAA-1182), this protein is CTP synthase.